A 556-amino-acid polypeptide reads, in one-letter code: MSTTTAGILFALSLALALAAVHVPLGDYMYRVYASEKHWRAERVAYRIIGADPAAEQGWGSYARSVLAFSAVSILFLFGLQLLQGRLPLHLNDPATEMTPALAWNTAVSFVTNTNWQAYSGESTQGHLVQMAGLSVQNFVSAAVGMAVAMAFVRGLARRDTGELGNFWVDLIRGSLRILLPLSIIGAIILVSGGVIQNFALHDTVVSTLSGAQQTIPGGPVASQEAIKELGTNGGGFFNANSAHPFENPTTWTNWVEIFLLSCIAFSLPRTFGRMVGSRKQGAAILAVMAVIATLSLSLMMLFQSQTHGTVPTAVGSATEGVEQRFGVADSAVFADLTTLTSTGAVDSFHDSYTSLGGLMTLFNMQLGEVAPGGVGSGLYSMLVLAVITVFVAGLMVGRTPEYLGKKITPREIKLAATYFLVTPLIVLIGTAVAMALPGQRDGMLNTGPHGLSEVLYAFTSAGNNNGSAFAGLSVNTEWYNTALGLAMVFGRFLPIILVLALAGSFARQGRTPESVGTLPTHRPQFVGMVTGVTLILVALTFLPVLALGPLAEGLH.

10 helical membrane-spanning segments follow: residues 6 to 26 (AGIL…VPLG), 65 to 85 (SVLA…LLQG), 133 to 153 (GLSV…MAFV), 176 to 196 (LRIL…GGVI), 249 to 269 (PTTW…FSLP), 283 to 303 (AAIL…MMLF), 378 to 398 (GLYS…LMVG), 419 to 439 (YFLV…ALPG), 483 to 503 (ALGL…LALA), and 526 to 546 (FVGM…LPVL).

Belongs to the KdpA family. In terms of assembly, the system is composed of three essential subunits: KdpA, KdpB and KdpC.

Its subcellular location is the cell membrane. In terms of biological role, part of the high-affinity ATP-driven potassium transport (or Kdp) system, which catalyzes the hydrolysis of ATP coupled with the electrogenic transport of potassium into the cytoplasm. This subunit binds the extracellular potassium ions and delivers the ions to the membrane domain of KdpB through an intramembrane tunnel. The sequence is that of Potassium-transporting ATPase potassium-binding subunit from Mycobacterium sp. (strain KMS).